The primary structure comprises 192 residues: Peptidyl-tRNA hydrolase (192 aa).

Y14 is a tRNA binding site. H19 (proton acceptor) is an active-site residue. Positions 64, 66, and 112 each coordinate tRNA.

The protein belongs to the PTH family. Monomer.

The protein resides in the cytoplasm. The enzyme catalyses an N-acyl-L-alpha-aminoacyl-tRNA + H2O = an N-acyl-L-amino acid + a tRNA + H(+). Functionally, hydrolyzes ribosome-free peptidyl-tRNAs (with 1 or more amino acids incorporated), which drop off the ribosome during protein synthesis, or as a result of ribosome stalling. Its function is as follows. Catalyzes the release of premature peptidyl moieties from peptidyl-tRNA molecules trapped in stalled 50S ribosomal subunits, and thus maintains levels of free tRNAs and 50S ribosomes. The polypeptide is Peptidyl-tRNA hydrolase (Anaeromyxobacter sp. (strain K)).